Reading from the N-terminus, the 178-residue chain is Ribosome maturation factor RimM (178 aa).

Residues 101-178 (DGEYYWYQLQ…EMKVEWDADF (78 aa)) enclose the PRC barrel domain.

Belongs to the RimM family. In terms of assembly, binds ribosomal protein uS19.

The protein resides in the cytoplasm. Functionally, an accessory protein needed during the final step in the assembly of 30S ribosomal subunit, possibly for assembly of the head region. Essential for efficient processing of 16S rRNA. May be needed both before and after RbfA during the maturation of 16S rRNA. It has affinity for free ribosomal 30S subunits but not for 70S ribosomes. The sequence is that of Ribosome maturation factor RimM from Pseudomonas fluorescens (strain ATCC BAA-477 / NRRL B-23932 / Pf-5).